The chain runs to 242 residues: uncharacterized protein (242 aa).

The first 17 residues, 1 to 17, serve as a signal peptide directing secretion; sequence MKFSPAYLLAFAPIVAA. N-linked (GlcNAc...) asparagine glycosylation is found at N47, N86, N122, N159, and N178. A disordered region spans residues 176–214; sequence NANESTADGQAQSGSSGSSSDSGSHSGHSSATQTSSTTA. Over residues 180–214 the composition is skewed to low complexity; that stretch reads STADGQAQSGSSGSSSDSGSHSGHSSATQTSSTTA. The GPI-like-anchor amidated alanine moiety is linked to residue A218. Residues 219 to 242 constitute a propeptide, removed in mature form; it reads GAVALETAAWGILGAAVVGGLAVL.

The GPI-like anchor contains a phosphoceramide lipid group. The anchor position has not been determined.

The protein resides in the cell membrane. This is an uncharacterized protein from Aspergillus fumigatus (strain ATCC MYA-4609 / CBS 101355 / FGSC A1100 / Af293) (Neosartorya fumigata).